We begin with the raw amino-acid sequence, 414 residues long: MLQKPRGTQDFFLDETKLWIKVETKLREILNKFNYSEIRTPMFESKELFIRSIGSTSDIVSKEMYEFVDKKNRSLVLKPEGTASVVRAVVENKLYAEDYLPFKTYYISPMFRYERPQNGRYRQFHQLGIEVYGSDSIQQDYEVLNIANNIINDFKLNKNIKIYTNYLITGKNREQYILELKKYLTDFKLCNDCNIRIEKNPLRVLDCKIDDKQFNNVPSMKDFLTDEEQKRYQQTLDLFKEMNISTIHDDKLVRGLDYYTGFIFEIKYEAKNIEQTIIAGGRYNNLVYEIGNINLPACGFGMGLERFINIIKEQNNKLNKNDQSIDLYTICLDQSAIKLNQQILELSRSIGLISDSNYYNMSLKSALKKSDKLNPKYLIILGEKEATSNQFIIKNKINKTEIKTTLTNFVNDLK.

It belongs to the class-II aminoacyl-tRNA synthetase family. Homodimer.

It localises to the cytoplasm. It catalyses the reaction tRNA(His) + L-histidine + ATP = L-histidyl-tRNA(His) + AMP + diphosphate + H(+). The protein is Histidine--tRNA ligase of Mycoplasma capricolum subsp. capricolum (strain California kid / ATCC 27343 / NCTC 10154).